The sequence spans 325 residues: Ribonucleoside-diphosphate reductase subunit beta (325 aa).

3 residues coordinate Fe cation: Asp73, Glu104, and His107. The active site involves Tyr111. 3 residues coordinate Fe cation: Glu164, Glu198, and His201.

It belongs to the ribonucleoside diphosphate reductase small chain family. In terms of assembly, tetramer of two alpha and two beta subunits. Fe cation is required as a cofactor.

It carries out the reaction a 2'-deoxyribonucleoside 5'-diphosphate + [thioredoxin]-disulfide + H2O = a ribonucleoside 5'-diphosphate + [thioredoxin]-dithiol. Its function is as follows. Provides the precursors necessary for DNA synthesis. Catalyzes the biosynthesis of deoxyribonucleotides from the corresponding ribonucleotides. This is Ribonucleoside-diphosphate reductase subunit beta (nrdF) from Mycobacterium leprae (strain TN).